The chain runs to 134 residues: kinetoplast-associated protein 3 (134 aa).

Positions Met-1 to Arg-10 are excised as a propeptide. The span at Pro-106–Lys-124 shows a compositional bias: low complexity. Residues Pro-106–Lys-134 are disordered. The segment covering Thr-125–Lys-134 has biased composition (basic residues).

It belongs to the KAP family. In terms of assembly, associates with the kinetoplast DNA network.

The protein localises to the mitochondrion matrix. It is found in the kinetoplast. Functionally, histone H1-like DNA-binding protein involved in the organization and segregation of kinetoplast DNA (kDNA). The mitochondrial DNA of kinetoplastid protozoa consists of about 5,000 minicircles and 20 to 30 maxicircles. These circular DNAs are held together by catenation into a highly organized compact disk structure referred to as a kinetoplast DNA (kDNA) network. Binds preferentially to a specific fragment of minicircle DNA and is able to compact kDNA networks through DNA charge neutralization and condensation. This Crithidia fasciculata protein is kinetoplast-associated protein 3 (KAP3).